Here is a 173-residue protein sequence, read N- to C-terminus: Large ribosomal subunit protein uL16 (173 aa).

The protein belongs to the universal ribosomal protein uL16 family.

This is Large ribosomal subunit protein uL16 from Methanococcus maripaludis (strain C6 / ATCC BAA-1332).